The sequence spans 182 residues: Guanylate kinase (182 aa).

The 179-residue stretch at 2–180 folds into the Guanylate kinase-like domain; the sequence is GTLTVITGPS…ALLKLEGLMG (179 aa). 9 to 16 contributes to the ATP binding site; that stretch reads GPSGVGKG.

This sequence belongs to the guanylate kinase family.

The protein resides in the cytoplasm. It catalyses the reaction GMP + ATP = GDP + ADP. The enzyme catalyses dZMP + ATP = dZDP + ADP. It functions in the pathway purine metabolism. In terms of biological role, essential for recycling GMP and indirectly, cGMP. Its function is as follows. (Microbial infection) Catalyzes the phosphorylation of dZMP to dZDP, when the bacterium is infected by a phage that produces the substrate for the synthesis of dZTP (2- amino-2'-deoxyadenosine 5'-triphosphate), which is then used by the phage as a DNA polymerase substrate. This is Guanylate kinase from Parasynechococcus marenigrum (strain WH8102).